The chain runs to 117 residues: Basic phospholipase A2 pseudexin A chain (117 aa).

Cystine bridges form between Cys11/Cys71, Cys27/Cys117, Cys29/Cys45, Cys44/Cys98, Cys51/Cys91, Cys60/Cys84, and Cys78/Cys89. Ca(2+) is bound by residues Tyr28, Gly30, and Gly32. His48 is a catalytic residue. Position 49 (Asp49) interacts with Ca(2+). Asp92 is a catalytic residue.

It belongs to the phospholipase A2 family. Group I subfamily. D49 sub-subfamily. The cofactor is Ca(2+). As to expression, expressed by the venom gland.

It is found in the secreted. The catalysed reaction is a 1,2-diacyl-sn-glycero-3-phosphocholine + H2O = a 1-acyl-sn-glycero-3-phosphocholine + a fatty acid + H(+). PLA2 catalyzes the calcium-dependent hydrolysis of the 2-acyl groups in 3-sn-phosphoglycerides. The sequence is that of Basic phospholipase A2 pseudexin A chain from Pseudechis porphyriacus (Red-bellied black snake).